The sequence spans 113 residues: Nitrogenase-stabilizing/protective protein NifW (113 aa).

This sequence belongs to the NifW family. As to quaternary structure, homotrimer; associates with NifD.

In terms of biological role, may protect the nitrogenase Fe-Mo protein from oxidative damage. This is Nitrogenase-stabilizing/protective protein NifW from Dechloromonas aromatica (strain RCB).